We begin with the raw amino-acid sequence, 227 residues long: MSERTPIVTIDGPSGVGKGTISQLLAQHLGWHLLDSGAIYRVLALAAIHHDVELENEEAITLLAAHLDVQFLSDADGKGIKVILEGEDVTSSIRSQECSNAASKVAALPRVREALLRRQRAFSTAPGLIADGRDMGTVVFPKAAAKIFLIASAQERAQRRYNQLQDKGFDVNIDRLLAEIIERDERDTNRAASPLKPADDALVIDTSGIGINEVFERVLEHVKASIS.

12 to 20 serves as a coordination point for ATP; that stretch reads GPSGVGKGT.

It belongs to the cytidylate kinase family. Type 1 subfamily.

The protein resides in the cytoplasm. The enzyme catalyses CMP + ATP = CDP + ADP. It catalyses the reaction dCMP + ATP = dCDP + ADP. The protein is Cytidylate kinase of Shewanella denitrificans (strain OS217 / ATCC BAA-1090 / DSM 15013).